The primary structure comprises 257 residues: 4-hydroxy-tetrahydrodipicolinate reductase (257 aa).

NAD(+)-binding positions include 8-13 (GSTGRV), 90-92 (ATT), and 114-117 (ATNM). Residue H146 is the Proton donor/acceptor of the active site. H147 lines the (S)-2,3,4,5-tetrahydrodipicolinate pocket. K150 acts as the Proton donor in catalysis. 156 to 157 (GT) contacts (S)-2,3,4,5-tetrahydrodipicolinate.

The protein belongs to the DapB family.

Its subcellular location is the cytoplasm. It carries out the reaction (S)-2,3,4,5-tetrahydrodipicolinate + NAD(+) + H2O = (2S,4S)-4-hydroxy-2,3,4,5-tetrahydrodipicolinate + NADH + H(+). The enzyme catalyses (S)-2,3,4,5-tetrahydrodipicolinate + NADP(+) + H2O = (2S,4S)-4-hydroxy-2,3,4,5-tetrahydrodipicolinate + NADPH + H(+). It functions in the pathway amino-acid biosynthesis; L-lysine biosynthesis via DAP pathway; (S)-tetrahydrodipicolinate from L-aspartate: step 4/4. Functionally, catalyzes the conversion of 4-hydroxy-tetrahydrodipicolinate (HTPA) to tetrahydrodipicolinate. The protein is 4-hydroxy-tetrahydrodipicolinate reductase of Aliarcobacter butzleri (strain RM4018) (Arcobacter butzleri).